The primary structure comprises 358 residues: WD repeat-containing protein 53 (358 aa).

WD repeat units follow at residues 1 to 38 (MAVK…AWGE), 43 to 80 (LGHT…VLDV), 85 to 123 (DSLD…ILDL), 127 to 166 (KVIR…LWSL), 173 to 225 (WITN…RIFR), and 232 to 270 (EQEL…LWDA). A disordered region spans residues 273 to 311 (EVEKKQKSPTKRTHRKKPKRGTCTKQGGNTNASVTDEEE). The segment covering 279-294 (KSPTKRTHRKKPKRGT) has biased composition (basic residues). The segment covering 295–306 (CTKQGGNTNASV) has biased composition (polar residues). Residues 314-355 (NILPKLNIEHGEKVNWLLGTKIKGHQNILVADQTSCISVYPL) form a WD 7 repeat.

This sequence belongs to the WD repeat WDR53 family.

The polypeptide is WD repeat-containing protein 53 (WDR53) (Homo sapiens (Human)).